The chain runs to 354 residues: Thiamine thiazole synthase 1, chloroplastic (354 aa).

The transit peptide at 1–45 directs the protein to the chloroplast; it reads MATAAASSLLKSSFAGSRLPAATRTTPASLVVATGPRGAGAGPIC. Residues Ala-100, 120–121, Gly-128, and Val-193 each bind substrate; that span reads EQ. Residue Cys-222 is modified to 2,3-didehydroalanine (Cys). Residues Asp-224, His-239, Met-291, and 301–303 contribute to the substrate site; that span reads RMG.

This sequence belongs to the THI4 family. In terms of assembly, homooctamer. Fe cation is required as a cofactor. In terms of processing, during the catalytic reaction, a sulfide is transferred from Cys-222 to a reaction intermediate, generating a dehydroalanine residue. In terms of tissue distribution, highest expression in developing embryos and green leaves and a very low level expression seen in endosperm, roots, etiolated shoots and immature ears.

It localises to the plastid. The protein resides in the chloroplast. It carries out the reaction [ADP-thiazole synthase]-L-cysteine + glycine + NAD(+) = [ADP-thiazole synthase]-dehydroalanine + ADP-5-ethyl-4-methylthiazole-2-carboxylate + nicotinamide + 3 H2O + 2 H(+). Involved in biosynthesis of the thiamine precursor thiazole. Catalyzes the conversion of NAD and glycine to adenosine diphosphate 5-(2-hydroxyethyl)-4-methylthiazole-2-carboxylic acid (ADT), an adenylated thiazole intermediate. The reaction includes an iron-dependent sulfide transfer from a conserved cysteine residue of the protein to a thiazole intermediate. The enzyme can only undergo a single turnover, which suggests it is a suicide enzyme. May have additional roles in adaptation to various stress conditions and in DNA damage tolerance. The polypeptide is Thiamine thiazole synthase 1, chloroplastic (Zea mays (Maize)).